A 127-amino-acid chain; its full sequence is S-adenosylmethionine decarboxylase proenzyme (127 aa).

The active-site Schiff-base intermediate with substrate; via pyruvic acid is the serine 63. The residue at position 63 (serine 63) is a Pyruvic acid (Ser); by autocatalysis. Residue histidine 68 is the Proton acceptor; for processing activity of the active site. Cysteine 83 acts as the Proton donor; for catalytic activity in catalysis.

The protein belongs to the prokaryotic AdoMetDC family. Type 1 subfamily. As to quaternary structure, heterotetramer of two alpha and two beta chains arranged as a dimer of alpha/beta heterodimers. Pyruvate is required as a cofactor. Is synthesized initially as an inactive proenzyme. Formation of the active enzyme involves a self-maturation process in which the active site pyruvoyl group is generated from an internal serine residue via an autocatalytic post-translational modification. Two non-identical subunits are generated from the proenzyme in this reaction, and the pyruvate is formed at the N-terminus of the alpha chain, which is derived from the carboxyl end of the proenzyme. The post-translation cleavage follows an unusual pathway, termed non-hydrolytic serinolysis, in which the side chain hydroxyl group of the serine supplies its oxygen atom to form the C-terminus of the beta chain, while the remainder of the serine residue undergoes an oxidative deamination to produce ammonia and the pyruvoyl group blocking the N-terminus of the alpha chain.

It carries out the reaction S-adenosyl-L-methionine + H(+) = S-adenosyl 3-(methylsulfanyl)propylamine + CO2. The protein operates within amine and polyamine biosynthesis; S-adenosylmethioninamine biosynthesis; S-adenosylmethioninamine from S-adenosyl-L-methionine: step 1/1. Functionally, catalyzes the decarboxylation of S-adenosylmethionine to S-adenosylmethioninamine (dcAdoMet), the propylamine donor required for the synthesis of the polyamines spermine and spermidine from the diamine putrescine. The chain is S-adenosylmethionine decarboxylase proenzyme from Carboxydothermus hydrogenoformans (strain ATCC BAA-161 / DSM 6008 / Z-2901).